The following is a 285-amino-acid chain: Acetyl-coenzyme A carboxylase carboxyl transferase subunit beta (285 aa).

The CoA carboxyltransferase N-terminal domain occupies 29 to 285 (IMTKCPKCKK…ILKIHQEVSN (257 aa)). Positions 33, 36, 52, and 55 each coordinate Zn(2+). Residues 33–55 (CPKCKKIMYTKELNENLNVCFNC) form a C4-type zinc finger.

It belongs to the AccD/PCCB family. As to quaternary structure, acetyl-CoA carboxylase is a heterohexamer composed of biotin carboxyl carrier protein (AccB), biotin carboxylase (AccC) and two subunits each of ACCase subunit alpha (AccA) and ACCase subunit beta (AccD). Zn(2+) is required as a cofactor.

Its subcellular location is the cytoplasm. It catalyses the reaction N(6)-carboxybiotinyl-L-lysyl-[protein] + acetyl-CoA = N(6)-biotinyl-L-lysyl-[protein] + malonyl-CoA. It participates in lipid metabolism; malonyl-CoA biosynthesis; malonyl-CoA from acetyl-CoA: step 1/1. In terms of biological role, component of the acetyl coenzyme A carboxylase (ACC) complex. Biotin carboxylase (BC) catalyzes the carboxylation of biotin on its carrier protein (BCCP) and then the CO(2) group is transferred by the transcarboxylase to acetyl-CoA to form malonyl-CoA. The sequence is that of Acetyl-coenzyme A carboxylase carboxyl transferase subunit beta from Staphylococcus epidermidis (strain ATCC 12228 / FDA PCI 1200).